The sequence spans 564 residues: Major facilitator superfamily transporter MPN_076 (564 aa).

12 consecutive transmembrane segments (helical) span residues 1–21 (MLWA…FVID), 65–85 (ITLL…KFGY), 89–109 (VMIM…GDPL), 176–196 (IAGY…GTTL), 220–240 (NLWG…FQSV), 249–269 (VFIL…FAWF), 306–326 (MIGM…GGWW), 358–378 (AGLP…YMVF), 404–424 (IVIV…FAFV), 425–445 (AIAT…ILIL), 457–477 (VSVL…AFDI), and 501–521 (GAIA…AIVV).

It belongs to the major facilitator superfamily.

The protein localises to the cell membrane. This is Major facilitator superfamily transporter MPN_076 from Mycoplasma pneumoniae (strain ATCC 29342 / M129 / Subtype 1) (Mycoplasmoides pneumoniae).